The primary structure comprises 370 residues: MRVLAAMSGGVDSAVAAARAVAAGHDVVGVHLALSTAPGALRTGSRGCCSKEDAGDARRAADVLGIPFYVWDFADRFKEDVIDDFVASYAAGETPNPCLRCNEKIKFTALADRAVALGFDAVATGHYARLEDGVLRRAVDADKDQSYVLGVLTADQLSRAMFPIGDTPKEQIREEAAERGLAVANKPDSHDICFIPTGDTRAFLGARIGVRPGSVVDADSGEVLAAHDGVHGFTIGQRKGLGVEGPAGDGRPRYVTAIEPETGTVRVGSAKNLDVWAISAQRAIWTSGQAPEGPVECMVQVRAHGGLAQAVAEAVDDGTSGGGISISLREPLTGVAKGQAVVLYRPDSELGDQVLGSGTISGTESEPNTL.

Residues 6 to 13 (AMSGGVDS) and Leu-32 contribute to the ATP site. Catalysis depends on Cys-101, which acts as the Nucleophile. The cysteines at positions 101 and 193 are disulfide-linked. ATP is bound at residue Gly-125. The interaction with tRNA stretch occupies residues 143 to 145 (KDQ). Residue Cys-193 is the Cysteine persulfide intermediate of the active site.

This sequence belongs to the MnmA/TRMU family.

The protein resides in the cytoplasm. It catalyses the reaction S-sulfanyl-L-cysteinyl-[protein] + uridine(34) in tRNA + AH2 + ATP = 2-thiouridine(34) in tRNA + L-cysteinyl-[protein] + A + AMP + diphosphate + H(+). In terms of biological role, catalyzes the 2-thiolation of uridine at the wobble position (U34) of tRNA, leading to the formation of s(2)U34. This Rhodococcus erythropolis (strain PR4 / NBRC 100887) protein is tRNA-specific 2-thiouridylase MnmA.